A 244-amino-acid polypeptide reads, in one-letter code: 3-deoxy-manno-octulosonate cytidylyltransferase (244 aa).

Belongs to the KdsB family.

The protein resides in the cytoplasm. The catalysed reaction is 3-deoxy-alpha-D-manno-oct-2-ulosonate + CTP = CMP-3-deoxy-beta-D-manno-octulosonate + diphosphate. The protein operates within nucleotide-sugar biosynthesis; CMP-3-deoxy-D-manno-octulosonate biosynthesis; CMP-3-deoxy-D-manno-octulosonate from 3-deoxy-D-manno-octulosonate and CTP: step 1/1. It functions in the pathway bacterial outer membrane biogenesis; lipopolysaccharide biosynthesis. Functionally, activates KDO (a required 8-carbon sugar) for incorporation into bacterial lipopolysaccharide in Gram-negative bacteria. This chain is 3-deoxy-manno-octulosonate cytidylyltransferase, found in Vesicomyosocius okutanii subsp. Calyptogena okutanii (strain HA).